The following is a 391-amino-acid chain: MESLKEMRKAQMSEGPAAILAIGTATPNNVYMQADYPDYYFRMTKSEHMTELKDKFRTLCEKSMIRKRHMCFSEEFLKANPEVSKHMGKSLNARQDIAVVETPRLGNEAAVKAIKEWGQPKSSITHLIFCSSAGVDMPGADYQLTRILGLNPSVKRMMVYQQGCYAGGTVLRLAKDLAENNKGSRVLVVCSELTAPTFRGPSPDAVDSLVGQALFADGAAALVVGADPDSSIERALYYLVSASQMLLPDSDGAIEGHIREEGLTVHLKKDVPALFSANIDTPLVEAFKPLGISDWNSIFWIAHPGGPAILDQIEEKLGLKEDKLRASKHVMSEYGNMSSSCVLFVLDEMRSRSLQDGKSTTGEGLDWGVLFGFGPGLTVETVVLRSVPIEA.

Cys-164 is a catalytic residue.

The protein belongs to the thiolase-like superfamily. Chalcone/stilbene synthases family.

The enzyme catalyses N-methylanthraniloyl-CoA + 3 malonyl-CoA + 3 H(+) = 1,3-dihydroxy-N-methylacridone + 3 CO2 + 4 CoA + H2O. The sequence is that of Probable acridone synthase 4 (ACS4) from Ruta graveolens (Common rue).